A 2313-amino-acid polypeptide reads, in one-letter code: Serine/threonine-protein kinase smg-1 (2313 aa).

Residues 779-791 are compositionally biased toward basic and acidic residues; sequence NRKSSDKKPKSTT. The tract at residues 779-798 is disordered; it reads NRKSSDKKPKSTTEDVPPPA. The 484-residue stretch at 1045–1528 folds into the FAT domain; that stretch reads ARERLQLVES…VFQVVSGAAS (484 aa). Residues 1478–1514 form an HEAT repeat; the sequence is VHVWKEILPQLFARLSHPSDHIRKTLVDLISRVCTAA. The PI3K/PI4K catalytic domain maps to 1746-2091; sequence VADNVTILPT…DTIELFQLRV (346 aa). The interval 1752-1758 is G-loop; the sequence is ILPTKTR. The catalytic loop stretch occupies residues 1954-1962; that stretch reads GLGDRHLDN. An activation loop region spans residues 1974 to 1998; it reads HIDYNICFDKGKILRIPETVPFRLS. The region spanning 2281–2313 is the FATC domain; that stretch reads RKLSPREEADVLIAEATSSANLAQMYEGWTAWV.

It belongs to the PI3/PI4-kinase family. As to quaternary structure, component of a post-splicing multiprotein NMD complex. Mn(2+) serves as cofactor.

It is found in the cytoplasm. It catalyses the reaction L-seryl-[protein] + ATP = O-phospho-L-seryl-[protein] + ADP + H(+). The catalysed reaction is L-threonyl-[protein] + ATP = O-phospho-L-threonyl-[protein] + ADP + H(+). Functionally, serine/threonine protein kinase involved in mRNA surveillance. Recognizes the substrate consensus sequence [ST]-Q. Involved in nonsense-mediated decay (NMD) of mRNAs containing premature stop codons by phosphorylating smg-2. This chain is Serine/threonine-protein kinase smg-1 (smg-1), found in Caenorhabditis briggsae.